The sequence spans 257 residues: ABC transporter ATP-binding protein YxdL (257 aa).

The 239-residue stretch at 5-243 folds into the ABC transporter domain; that stretch reads LEVKHINKTY…FYEQILDVLS (239 aa). 40-47 is an ATP binding site; sequence GPSGSGKT.

Belongs to the ABC transporter superfamily. In terms of assembly, the complex is composed of two ATP-binding proteins (YxdL) and two transmembrane proteins (YxdM).

Functionally, part of the ABC transporter complex YxdLM which could be involved in peptide resistance. Responsible for energy coupling to the transport system. This chain is ABC transporter ATP-binding protein YxdL (yxdL), found in Bacillus subtilis (strain 168).